The following is a 171-amino-acid chain: UPF0398 protein M6_Spy1399 (171 aa).

It belongs to the UPF0398 family.

This chain is UPF0398 protein M6_Spy1399, found in Streptococcus pyogenes serotype M6 (strain ATCC BAA-946 / MGAS10394).